Reading from the N-terminus, the 201-residue chain is Small ribosomal subunit protein uS4c (201 aa).

The tract at residues 13-43 is disordered; sequence RRLGDLPGLSRKAIKRPYPPGEHGQKPRKPS. The S4 RNA-binding domain occupies 90–154; the sequence is MRLDNTIFRL…SKQLVESYLA (65 aa).

Belongs to the universal ribosomal protein uS4 family. As to quaternary structure, part of the 30S ribosomal subunit. Contacts protein S5. The interaction surface between S4 and S5 is involved in control of translational fidelity.

Its subcellular location is the plastid. The protein localises to the chloroplast. Functionally, one of the primary rRNA binding proteins, it binds directly to 16S rRNA where it nucleates assembly of the body of the 30S subunit. With S5 and S12 plays an important role in translational accuracy. The sequence is that of Small ribosomal subunit protein uS4c (rps4) from Porphyra purpurea (Red seaweed).